Here is a 197-residue protein sequence, read N- to C-terminus: MSEGLFKKLEEVQRKLAERIVERPLEVSKIKTVGAVDVSYRDERARAAFVLCSFPDCELLKQRVVEVDVSFPYIPTFFFLRETRPVLIALGKERPDVLLVEGHGRAHPRGYGLASHIGLVLGIPTIGISKRLLRGTPEGSWVKVGKAYVSVGHLIDLPSAVEVVKTLNKNGYPLPLRIADRLSRGHTSWSGGVNDEH.

2 residues coordinate Mg(2+): aspartate 37 and glutamate 101.

It belongs to the endonuclease V family. Mg(2+) serves as cofactor.

It is found in the cytoplasm. The catalysed reaction is Endonucleolytic cleavage at apurinic or apyrimidinic sites to products with a 5'-phosphate.. Functionally, DNA repair enzyme involved in the repair of deaminated bases. Selectively cleaves double-stranded DNA at the second phosphodiester bond 3' to a deoxyinosine leaving behind the intact lesion on the nicked DNA. In Thermococcus kodakarensis (strain ATCC BAA-918 / JCM 12380 / KOD1) (Pyrococcus kodakaraensis (strain KOD1)), this protein is Endonuclease V.